We begin with the raw amino-acid sequence, 827 residues long: Glycerol-3-phosphate acyltransferase (827 aa).

An HXXXXD motif motif is present at residues 325–330 (CHRSHM).

It belongs to the GPAT/DAPAT family.

It localises to the cell inner membrane. It carries out the reaction sn-glycerol 3-phosphate + an acyl-CoA = a 1-acyl-sn-glycero-3-phosphate + CoA. It functions in the pathway phospholipid metabolism; CDP-diacylglycerol biosynthesis; CDP-diacylglycerol from sn-glycerol 3-phosphate: step 1/3. The polypeptide is Glycerol-3-phosphate acyltransferase (Shigella flexneri serotype 5b (strain 8401)).